We begin with the raw amino-acid sequence, 221 residues long: Urease accessory protein UreE (221 aa).

A disordered region spans residues 160 to 194 (VPGTNKTTGDLAEEEQETERHEPHAHAIGEHHHEK). Over residues 177–194 (TERHEPHAHAIGEHHHEK) the composition is skewed to basic and acidic residues.

The protein belongs to the UreE family.

Its subcellular location is the cytoplasm. Involved in urease metallocenter assembly. Binds nickel. Probably functions as a nickel donor during metallocenter assembly. This is Urease accessory protein UreE from Bifidobacterium longum subsp. infantis (strain ATCC 15697 / DSM 20088 / JCM 1222 / NCTC 11817 / S12).